The sequence spans 838 residues: Protein P (838 aa).

A terminal protein domain (TP) region spans residues 1–179; it reads MPLSYQHFRK…FCGSPYSWEQ (179 aa). A spacer region spans residues 180–341; that stretch reads ELQHSQRHGD…YCLSHLVNLL (162 aa). Positions 218-242 are disordered; sequence LGLQPHQGPLATSQPGRSGSIRPRA. Positions 342–685 are polymerase/reverse transcriptase domain (RT); it reads EDWGPCVEHG…YLNLYPVARQ (344 aa). Residues 352-595 enclose the Reverse transcriptase domain; the sequence is EHHIRIPRTP…YSLNFMGYVI (244 aa). 3 residues coordinate Mg(2+): D424, D546, and D547.

This sequence belongs to the hepadnaviridae P protein family.

The enzyme catalyses DNA(n) + a 2'-deoxyribonucleoside 5'-triphosphate = DNA(n+1) + diphosphate. It catalyses the reaction Endonucleolytic cleavage to 5'-phosphomonoester.. Its activity is regulated as follows. Activated by host HSP70 and HSP40 in vitro to be able to bind the epsilon loop of the pgRNA. Because deletion of the RNase H region renders the protein partly chaperone-independent, the chaperones may be needed indirectly to relieve occlusion of the RNA-binding site by this domain. Inhibited by several reverse-transcriptase inhibitors: Lamivudine, Adefovir and Entecavir. In terms of biological role, multifunctional enzyme that converts the viral RNA genome into dsDNA in viral cytoplasmic capsids. This enzyme displays a DNA polymerase activity that can copy either DNA or RNA templates, and a ribonuclease H (RNase H) activity that cleaves the RNA strand of RNA-DNA heteroduplexes in a partially processive 3'- to 5'-endonucleasic mode. Neo-synthesized pregenomic RNA (pgRNA) are encapsidated together with the P protein, and reverse-transcribed inside the nucleocapsid. Initiation of reverse-transcription occurs first by binding the epsilon loop on the pgRNA genome, and is initiated by protein priming, thereby the 5'-end of (-)DNA is covalently linked to P protein. Partial (+)DNA is synthesized from the (-)DNA template and generates the relaxed circular DNA (RC-DNA) genome. After budding and infection, the RC-DNA migrates in the nucleus, and is converted into a plasmid-like covalently closed circular DNA (cccDNA). The activity of P protein does not seem to be necessary for cccDNA generation, and is presumably released from (+)DNA by host nuclear DNA repair machinery. In Homo sapiens (Human), this protein is Protein P.